We begin with the raw amino-acid sequence, 444 residues long: Homogentisate 1,2-dioxygenase (444 aa).

The segment at 92-111 is disordered; sequence GDSADVPPTPPNQLRWDPLP. The active-site Proton acceptor is H298. H341 and E347 together coordinate Fe cation. Residues Y356 and H377 each contribute to the homogentisate site. H377 contributes to the Fe cation binding site.

This sequence belongs to the homogentisate dioxygenase family. Hexamer; dimer of trimers. The cofactor is Fe cation.

It catalyses the reaction homogentisate + O2 = 4-maleylacetoacetate + H(+). Its pathway is amino-acid degradation; L-phenylalanine degradation; acetoacetate and fumarate from L-phenylalanine: step 4/6. In terms of biological role, involved in the catabolism of homogentisate (2,5-dihydroxyphenylacetate or 2,5-OH-PhAc), a central intermediate in the degradation of phenylalanine and tyrosine. Catalyzes the oxidative ring cleavage of the aromatic ring of homogentisate to yield maleylacetoacetate. The polypeptide is Homogentisate 1,2-dioxygenase (Burkholderia vietnamiensis (strain G4 / LMG 22486) (Burkholderia cepacia (strain R1808))).